Reading from the N-terminus, the 180-residue chain is Large ribosomal subunit protein uL5c (180 aa).

It belongs to the universal ribosomal protein uL5 family. Part of the 50S ribosomal subunit; contacts the 5S rRNA.

The protein resides in the plastid. The protein localises to the chloroplast. Binds 5S rRNA, forms part of the central protuberance of the 50S subunit. This chain is Large ribosomal subunit protein uL5c (rpl5), found in Chlorella vulgaris (Green alga).